Reading from the N-terminus, the 434-residue chain is MATLKTFRTLVQLKHKLGKAYEIVGEPRLPKWFHVEYLEDPKKMYVEPTLVEIMFGKDGEHIPHVECTLHVLIHVNVWGPEKQAEILIFGPPNFQKDVAQMLSNVAHFCRMKLMEKEALEAGVERRLMAASKATTQPTPVKVRDAATQVAPVQVRDAAIQPAPVKVRDAATQVAPVQVHEVATQPVPVQVRDAATQPVPVRVRDAATQPVPVRVRDAATQPVPVRVRDAATQPVPVRVRDAATEPVPVQVRDAATQPAPVQVRDAATQPAPVQVRDAATQPAPVQVRDAATQPAPVQVRDAATQPAPVQVRDAATQPAPVQVRDAATQPAPVQVREAATQQTPVEVADDTQLVQLKAGEAFAQHTSGKVHQDVNGQSPIEVCEGATQRHSVDASEALSQKCPEDLEGGDTETSLDDSYVIIRPSRAVWEPFVML.

Residues 1-39 (MATLKTFRTLVQLKHKLGKAYEIVGEPRLPKWFHVEYLE) form an involved in RNA binding region. The 79-residue stretch at 40–118 (DPKKMYVEPT…CRMKLMEKEA (79 aa)) folds into the KH; atypical domain. T267 and T279 each carry phosphothreonine. Residues 334-434 (VREAATQQTP…RAVWEPFVML (101 aa)) are required for interaction with NUMA1 and regulation of apoptosis in response to DNA damage.

Belongs to the KHDC1 family. In terms of assembly, component of the subcortical maternal complex (SCMC), at least composed of NLRP5, KHDC3, OOEP, and TLE6. Within the complex, interacts with NLRP5, KHDC3 and TLE6. The SCMC may facilitate translocation of its components between the nuclear and cytoplasmic compartments. Forms a scaffold complex with OOEP/FLOPED, and interacts with BLM and TRIM25 at DNA replication forks. Interacts with PARP1; the interaction is increased following the formation of DNA double-strand breaks. Interacts (via C-terminus) with NUMA1.

It localises to the cytoplasm. The protein localises to the cell cortex. The protein resides in the nucleus. Its subcellular location is the mitochondrion. It is found in the cytoskeleton. It localises to the microtubule organizing center. The protein localises to the centrosome. The protein resides in the chromosome. In terms of biological role, component of the subcortical maternal complex (SCMC), a multiprotein complex that plays a key role in early embryonic development. The SCMC complex is a structural constituent of cytoplasmic lattices, which consist in fibrous structures found in the cytoplasm of oocytes and preimplantation embryos. They are required to store maternal proteins critical for embryonic development, such as proteins that control epigenetic reprogramming of the preimplantation embryo, and prevent their degradation or activation. KHDC3 ensures proper spindle assembly by regulating the localization of AURKA via RHOA signaling and of PLK1 via a RHOA-independent process. Required for the localization of MAD2L1 to kinetochores to enable spindle assembly checkpoint function. As part of the OOEP-KHDC3 scaffold, recruits BLM and TRIM25 to DNA replication forks, thereby promoting the ubiquitination of BLM by TRIM25, enhancing BLM retainment at replication forks and therefore promoting stalled replication fork restart. Regulates homologous recombination-mediated DNA repair via recruitment of RAD51 to sites of DNA double-strand breaks, and sustainment of PARP1 activity, which in turn modulates downstream ATM or ATR activation. Activation of ATM or ATR in response to DNA double-strand breaks may be cell-type specific. Its role in DNA double-strand break repair is independent of its role in restarting stalled replication forks. Promotes neural stem cell neurogenesis and neuronal differentiation in the hippocampus. May regulate normal development of learning, memory and anxiety. Capable of binding RNA. The chain is KH domain-containing protein 3 from Rattus norvegicus (Rat).